Consider the following 158-residue polypeptide: Pyruvoyl-dependent arginine decarboxylase (158 aa).

Ser44 is subject to Pyruvic acid (Ser).

Belongs to the PdaD family. Pyruvate is required as a cofactor.

The catalysed reaction is L-arginine + H(+) = agmatine + CO2. In Pyrococcus abyssi (strain GE5 / Orsay), this protein is Pyruvoyl-dependent arginine decarboxylase.